The chain runs to 135 residues: MNPLVYFSSQSENTHRFISRVGLPALRIPIATEQPALKVDRPYILVVPSYGGGSTKGAVPRQVIIFLNDPHNRAYLRGVIAAGNTNFGAAYCIAGDIIAQKCQVPYLYRFELLGTAEDVANVRKGVTEFWQQQTT.

Belongs to the NrdI family.

Its function is as follows. Probably involved in ribonucleotide reductase function. The sequence is that of Protein NrdI from Pectobacterium carotovorum subsp. carotovorum (strain PC1).